Reading from the N-terminus, the 496-residue chain is UDP-N-acetylmuramoylalanine--D-glutamate ligase (496 aa).

Gly-130–Thr-136 provides a ligand contact to ATP.

This sequence belongs to the MurCDEF family.

It is found in the cytoplasm. The catalysed reaction is UDP-N-acetyl-alpha-D-muramoyl-L-alanine + D-glutamate + ATP = UDP-N-acetyl-alpha-D-muramoyl-L-alanyl-D-glutamate + ADP + phosphate + H(+). It participates in cell wall biogenesis; peptidoglycan biosynthesis. In terms of biological role, cell wall formation. Catalyzes the addition of glutamate to the nucleotide precursor UDP-N-acetylmuramoyl-L-alanine (UMA). This is UDP-N-acetylmuramoylalanine--D-glutamate ligase (murD) from Mycobacterium tuberculosis (strain CDC 1551 / Oshkosh).